Here is a 378-residue protein sequence, read N- to C-terminus: Succinate--CoA ligase [GDP-forming] subunit beta (378 aa).

The region spanning 9–235 (KEILARYGVP…VEAEHPLEVE (227 aa)) is the ATP-grasp domain. Residues lysine 45, 52–54 (GRG), valine 94, and glutamate 99 contribute to the GTP site. The Mg(2+) site is built by asparagine 190 and aspartate 204. Substrate is bound by residues asparagine 255 and 312–314 (GIT).

Belongs to the succinate/malate CoA ligase beta subunit family. Heterotetramer of two alpha and two beta subunits. It depends on Mg(2+) as a cofactor.

It catalyses the reaction GTP + succinate + CoA = succinyl-CoA + GDP + phosphate. It carries out the reaction succinate + ATP + CoA = succinyl-CoA + ADP + phosphate. It participates in carbohydrate metabolism; tricarboxylic acid cycle; succinate from succinyl-CoA (ligase route): step 1/1. Functionally, succinyl-CoA synthetase functions in the citric acid cycle (TCA), coupling the hydrolysis of succinyl-CoA to the synthesis of either ATP or GTP and thus represents the only step of substrate-level phosphorylation in the TCA. The beta subunit provides nucleotide specificity of the enzyme and binds the substrate succinate, while the binding sites for coenzyme A and phosphate are found in the alpha subunit. Can use either ATP or GTP, but prefers GTP. In Thermus thermophilus, this protein is Succinate--CoA ligase [GDP-forming] subunit beta.